Here is a 113-residue protein sequence, read N- to C-terminus: Iron-sulfur cluster insertion protein ErpA (113 aa).

Residues Cys-41, Cys-105, and Cys-107 each contribute to the iron-sulfur cluster site.

The protein belongs to the HesB/IscA family. In terms of assembly, homodimer. Iron-sulfur cluster is required as a cofactor.

Its function is as follows. Required for insertion of 4Fe-4S clusters for at least IspG. The chain is Iron-sulfur cluster insertion protein ErpA from Actinobacillus pleuropneumoniae serotype 3 (strain JL03).